We begin with the raw amino-acid sequence, 492 residues long: Aspartyl/glutamyl-tRNA(Asn/Gln) amidotransferase subunit B (492 aa).

It belongs to the GatB/GatE family. GatB subfamily. As to quaternary structure, heterotrimer of A, B and C subunits.

The enzyme catalyses L-glutamyl-tRNA(Gln) + L-glutamine + ATP + H2O = L-glutaminyl-tRNA(Gln) + L-glutamate + ADP + phosphate + H(+). The catalysed reaction is L-aspartyl-tRNA(Asn) + L-glutamine + ATP + H2O = L-asparaginyl-tRNA(Asn) + L-glutamate + ADP + phosphate + 2 H(+). Functionally, allows the formation of correctly charged Asn-tRNA(Asn) or Gln-tRNA(Gln) through the transamidation of misacylated Asp-tRNA(Asn) or Glu-tRNA(Gln) in organisms which lack either or both of asparaginyl-tRNA or glutaminyl-tRNA synthetases. The reaction takes place in the presence of glutamine and ATP through an activated phospho-Asp-tRNA(Asn) or phospho-Glu-tRNA(Gln). This is Aspartyl/glutamyl-tRNA(Asn/Gln) amidotransferase subunit B from Dehalococcoides mccartyi (strain CBDB1).